The sequence spans 1613 residues: MLHVAQEEARLDLLKQLKERLQSRLDKDKAAEVDTFAHLFYAAVPLEDLADRRLDDLYGATLSVWHFIQQFDPEAPKVRVLNPDFEEHGWQSTHTFIAVLHEDMPFLVDSVRVELNRRGMTVHAIHNAVLAVGRDDEHRLQRVASPEETDAPEARESLIAIEVDRHSNPAELEEIEASLLEVLREVRTAVSDFDPMRAQARAAIEELEATRPAQVDPADHREAIEFLQWLLQDNFTFLGYDEYEVREDQGRQRLDKVQNSELGVFRLDQPRYRERIRTDLGVEGDHYVPMPQLMSFAKSAHHARIHRPTYPDYISIDRYDDQGRVIGERRFLGMFTATVYNESPRNVPILRRKLQAVMDIAGFSPKGHNGKQLLQILEVYPRDDLFQIDIEELAQTALGILDIRERRRVRLFIREDTFGKFYSCLVFVPRDVFSTELRVRLQELLCEELDATFGDFNTYLSESVLARIQFILRFNGEKPVEYDIKRLEEKLVKLARNWRDDLLNASIEGFGEESANLLMSRFRDAFPASYREDFSARTAVYDLQHIGELDEGAPLALSLYRLIEEEGSGVNLKLFHRGAPIPLSDVLPMMENLGLRVIGERPYEVQASDASYWIHDFNLEHHTSVEMNLQEMRGPFIEAFQRIWAGEADNDAFNRLIIGANLDWREVAMLRAYARYLKQIRFGMSQDYIATTLGSHPEITRELVSLFELRFDPAERPGEGDIEECESRILTLLDEVPSLNDDQLLRRYMELIKATLRTNYYQRTEEGRYKDYLAFKLDPSQVSGIPKPCPAYEIFVCSPRVEGVHLRGGKVARGGLRWSDRHEDFRTEVLGLVKAQQVKNAVIVPMGAKGGFVCKRMPEGADREATQKEGIACYQIFIRALLDVTDNLVGGEVVPPRDVVRHDDNDPYLVVAADKGTATFSDIANEISTEYGHWLGDAFASGGANGYDHKKMAITAKGAWESVKRHFRGLGVNTQEDEFSVVGIGDMAGDVFGNGMLLSDKIRLVGAFNHLHIFVDPTPDAAASFAERQRLFDMPRSSWEDYNTELISEGGGIFPRSAKSITITPQMKKVFGIREDKLSPNELIRAMLVSKVDLVWNGGIGTYVKSSEETDAEVGDKANDALRIDGRELNCRVVGEGGNLGLTQRGRMEAAAKGVRVNTDFIDNAGGVNCSDHEVNIKILIDEVVSRGDLTEKQRNQLLADMTDEVSELVLLDNYRQTQALDLAELLSRQGIGPYRRFISELEAAGQIDRELEFLPSDEELLERTQHNQGMTLPELSVLISYAKSVLKGDLIASDVPDDPTIMRFVERVFPSMLAERYRDEMYEHRLKREIVATQVANDLVDYMGVVFVRRLMDSTGADRADIARAYVIARDSFQLPRLWEQIEALDNKVPSQVQYSMMLDLMRMLRRSTRWFLRQRTGMSTRDTIDYFAPRLAQLQENIGKRLRGEEQEQWSARRQELVKAGVPEALASTVAAAGSLYAALGIIQTARQTDEKPQRVAEIFYEVGARLELPWIIQQVTRLEVRDGWQAKARDTFRDDIDRQQLALTASVLGMDGGPRDSAERVDRWLSLHEGMHQRWRHLLEEVGSGSQGGFPLFAVAVRELVDLAESNSEA.

Lysine 849 is an active-site residue.

Belongs to the Glu/Leu/Phe/Val dehydrogenases family.

The catalysed reaction is L-glutamate + NAD(+) + H2O = 2-oxoglutarate + NH4(+) + NADH + H(+). In terms of biological role, involved in arginine catabolism by converting L-glutamate, into 2-oxoglutarate, which is then channeled into the tricarboxylic acid cycle. This chain is NAD-specific glutamate dehydrogenase, found in Halomonas elongata (strain ATCC 33173 / DSM 2581 / NBRC 15536 / NCIMB 2198 / 1H9).